The sequence spans 1270 residues: Activating transcription factor 7-interacting protein 1 (1270 aa).

Methionine 1 carries the N-acetylmethionine modification. Lysine 33 is covalently cross-linked (Glycyl lysine isopeptide (Lys-Gly) (interchain with G-Cter in SUMO2)). A phosphoserine mark is found at serine 57 and serine 113. Disordered stretches follow at residues 104–223 and 235–402; these read DDDL…ISGD and TSVD…EDET. Threonine 118 carries the post-translational modification Phosphothreonine. Low complexity-rich tracts occupy residues 132–203 and 248–269; these read GDPA…SSGD and DPAS…SDDL. 2 stretches are compositionally biased toward basic and acidic residues: residues 310–327 and 333–343; these read SNKD…EKLE and DSLDEKNKADN. Positions 347-356 are enriched in acidic residues; sequence ANEETLETDD. Positions 363-373 are enriched in basic and acidic residues; sequence RPPENEKKVEE. Phosphoserine occurs at positions 445, 473, 474, 477, 479, and 496. Disordered regions lie at residues 455 to 570, 658 to 685, 822 to 862, and 886 to 906; these read TSLL…SKRR, EDLK…NSNN, PPTV…PTAS, and RTSL…NRGP. The segment covering 474–486 has biased composition (polar residues); sequence SFGSPSKQESSES. Over residues 496–509 the composition is skewed to acidic residues; the sequence is SDEEDISGEKDESE. Over residues 524-552 the composition is skewed to basic and acidic residues; sequence SNEKDNKPEEEEQVIHEDDERPSEKNEFS. The Nuclear localization signal motif lies at 553–571; it reads RRKRSKSEDMDNVQSKRRR. Lysine 558 is covalently cross-linked (Glycyl lysine isopeptide (Lys-Gly) (interchain with G-Cter in SUMO2)). At serine 559 the chain carries Phosphoserine. The interval 562-817 is interaction with SETDB1; that stretch reads MDNVQSKRRR…NQPSGNVEFI (256 aa). Positions 617-665 form a coiled coil; the sequence is KTLAELKTRVEKIECNKRHKTVLTELQAKIARLTKRFEAAKEDLKKRHE. Residue serine 673 is modified to Phosphoserine. The segment covering 822–834 has biased composition (polar residues); it reads PPTVSGLTKNPVS. Residues 843–854 show a composition bias toward low complexity; the sequence is KPNNVPSVPSPS. Phosphoserine is present on serine 899. Residues lysine 910 and lysine 938 each participate in a glycyl lysine isopeptide (Lys-Gly) (interchain with G-Cter in SUMO2) cross-link. Composition is skewed to polar residues over residues 918–942 and 950–964; these read TSSA…TIDA and DSTS…SDSS. 2 disordered regions span residues 918–1026 and 1115–1160; these read TSSA…SQTT and STGP…STSL. Positions 965-975 are interaction with SUMO; the sequence is GVIDLTMDDEE. Composition is skewed to polar residues over residues 988-999 and 1016-1026; these read TPVSTMSSSQPV and GVPTSGPSQTT. Residues 1134–1151 are compositionally biased toward pro residues; it reads PRPVHPAPLPEAPQPQRL. Residues 1154-1270 are interaction with MBD1; sequence EAASTSLPQK…TDVISSTQSS (117 aa). The Fibronectin type-III domain maps to 1160–1270; sequence LPQKPHLKLA…TDVISSTQSS (111 aa).

Belongs to the MCAF family. As to quaternary structure, interacts with MBD1; the interaction is enhanced when MBD1 is sumoylated. Interacts with SETDB1; the interaction protects SETDB1 from proteasomal degradation and is required to stimulate histone methyltransferase activity and facilitate the conversion of dimethylated to trimethylated H3 'Lys-9'. Interacts with SUMO ubiquitin-like proteins (SUMO1, SUNO2 and SUMO3), with a preference for SUMO2 and SUMO3. Interacts with SP1, ATF7 and ZHX1. Interacts with the general transcription machinery, including ERCC2, ERCC3, GTF2E1, GTF2E2 and POLR2A. In terms of assembly, (Microbial infection) Interacts with Epstein-Barr virus BRLF1/Rta protein, leading to the regulation of host genes in Epstein-Barr virus-infected cells. In terms of tissue distribution, detected at low levels in breast, lung and stomach; highly up-regulated in the corresponding cancerous tissues (at protein level).

It is found in the nucleus. In terms of biological role, recruiter that couples transcriptional factors to general transcription apparatus and thereby modulates transcription regulation and chromatin formation. Can both act as an activator or a repressor depending on the context. Required for HUSH-mediated heterochromatin formation and gene silencing. Mediates MBD1-dependent transcriptional repression, probably by recruiting complexes containing SETDB1. Stabilizes SETDB1, is required to stimulate histone methyltransferase activity of SETDB1 and facilitates the conversion of dimethylated to trimethylated H3 'Lys-9' (H3K9me3). The complex formed with MBD1 and SETDB1 represses transcription and couples DNA methylation and histone H3 'Lys-9' trimethylation (H3K9me3). Facilitates telomerase TERT and TERC gene expression by SP1 in cancer cells. The chain is Activating transcription factor 7-interacting protein 1 from Homo sapiens (Human).